Reading from the N-terminus, the 241-residue chain is Chloride intracellular channel protein 1 (241 aa).

An N-acetylalanine modification is found at Ala2. The required for insertion into the membrane stretch occupies residues 2–90 (AEEQPQVELF…EEFLEAVLCP (89 aa)). Lys13 is subject to N6-acetyllysine. A G-site motif is present at residues 24–27 (CPFS). Cys24 and Cys59 are disulfide-bonded. A helical membrane pass occupies residues 26–46 (FSQRLFMVLWLKGVTFNVTTV). Positions 93–233 (YPKLAALNPE…PDDEEIELAY (141 aa)) constitute a GST C-terminal domain. Lys119 carries the post-translational modification N6-acetyllysine. Phosphoserine is present on Ser121. Lys131 is subject to N6-acetyllysine. Phosphoserine is present on residues Ser156 and Ser211. The residue at position 233 (Tyr233) is a Phosphotyrosine.

This sequence belongs to the chloride channel CLIC family. Monomer. Homodimer (in vitro). Interacts with TRAPPC2. Dimerization requires a conformation change that leads to the exposure of a large hydrophobic surface. In vivo, this may lead to membrane insertion.

It localises to the nucleus. The protein resides in the nucleus membrane. The protein localises to the cytoplasm. Its subcellular location is the cell membrane. It is found in the endoplasmic reticulum. The enzyme catalyses L-dehydroascorbate + 2 glutathione = glutathione disulfide + L-ascorbate. The catalysed reaction is chloride(in) = chloride(out). It catalyses the reaction iodide(out) = iodide(in). It carries out the reaction thiocyanate(in) = thiocyanate(out). The enzyme catalyses nitrate(in) = nitrate(out). The catalysed reaction is bromide(in) = bromide(out). It catalyses the reaction fluoride(in) = fluoride(out). Its function is as follows. In the soluble state, catalyzes glutaredoxin-like thiol disulfide exchange reactions with reduced glutathione as electron donor. Reduces selenite and dehydroascorbate and may act as an antioxidant during oxidative stress response. Can insert into membranes and form voltage-dependent multi-ion conductive channels. Membrane insertion seems to be redox-regulated and may occur only under oxidizing conditions. Involved in regulation of the cell cycle. The polypeptide is Chloride intracellular channel protein 1 (CLIC1) (Oryctolagus cuniculus (Rabbit)).